The primary structure comprises 973 residues: FHF complex subunit HOOK-interacting protein 1B (973 aa).

3 disordered regions span residues 466 to 493 (SSPS…VVTV), 510 to 547 (SLGG…PGEL), and 573 to 647 (SAPY…EGAK). Ser-467 is subject to Phosphoserine. The segment covering 482–493 (SPSVDSSSVVTV) has biased composition (low complexity). Residues Ser-510, Ser-523, Ser-529, and Ser-533 each carry the phosphoserine modification. Composition is skewed to low complexity over residues 529–538 (SPASSPGRRP) and 622–639 (GARE…NGLP). Residues Ser-859 and Ser-898 each carry the phosphoserine modification.

Belongs to the FHIP family. Component of the FTS/Hook/FHIP complex (FHF complex), composed of AKTIP/FTS, FHIP1B, and one or more members of the Hook family of proteins HOOK1, HOOK2, and HOOK3. The FHF complex associates with the homotypic vesicular sorting complex (the HOPS complex).

In terms of biological role, component of the FTS/Hook/FHIP complex (FHF complex). The FHF complex may function to promote vesicle trafficking and/or fusion via the homotypic vesicular protein sorting complex (the HOPS complex). FHF complex promotes the distribution of AP-4 complex to the perinuclear area of the cell. In Bos taurus (Bovine), this protein is FHF complex subunit HOOK-interacting protein 1B (FHIP1B).